The sequence spans 828 residues: Auxin response factor 2B (828 aa).

Positions Phe-128 to Met-230 form a DNA-binding region, TF-B3. Disordered regions lie at residues Pro-348–Lys-397, Glu-681–Arg-703, and Asn-791–Ser-828. Residues Leu-360–Ile-370 are compositionally biased toward pro residues. The segment covering Val-380–Leu-390 has biased composition (polar residues). The PB1 domain maps to Arg-703 to Glu-786. Positions Asn-791–Ala-806 are enriched in polar residues.

It belongs to the ARF family. In terms of assembly, homodimers and heterodimers. As to expression, expressed in root, leaf and stem. Also expressed in flower and fruit. Expressed in flower buds about three days before opening including stamen, petal and sepal with the highest in ovary.

The protein localises to the nucleus. Its function is as follows. Auxin response factors (ARFs) are transcriptional factors that binds specifically to the DNA sequence 5'-TGTCTC-3' found in the auxin-responsive promoter elements (AuxREs). Could act as transcriptional activator or repressor. Involved in the control of fruit ripening process. Regulates expression of a number of ripening regulators, transcription factors, and ethylene biosynthesis and signaling components. May act as a transcriptional repressor of auxin-responsive genes. The protein is Auxin response factor 2B of Solanum lycopersicum (Tomato).